A 78-amino-acid chain; its full sequence is Large ribosomal subunit protein bL28 (78 aa).

It belongs to the bacterial ribosomal protein bL28 family.

The polypeptide is Large ribosomal subunit protein bL28 (Tropheryma whipplei (strain TW08/27) (Whipple's bacillus)).